The following is a 257-amino-acid chain: Phosphate import ATP-binding protein PstB (257 aa).

An ABC transporter domain is found at 4–246; the sequence is LKLNDVNIYY…KKIFENPDQK (243 aa). 36–43 is a binding site for ATP; the sequence is GPSGCGKS.

The protein belongs to the ABC transporter superfamily. Phosphate importer (TC 3.A.1.7) family. In terms of assembly, the complex is composed of two ATP-binding proteins (PstB), two transmembrane proteins (PstC and PstA) and a solute-binding protein (PstS).

The protein resides in the cell membrane. The enzyme catalyses phosphate(out) + ATP + H2O = ADP + 2 phosphate(in) + H(+). Functionally, part of the ABC transporter complex PstSACB involved in phosphate import. Responsible for energy coupling to the transport system. The polypeptide is Phosphate import ATP-binding protein PstB (Corynebacterium glutamicum (strain ATCC 13032 / DSM 20300 / JCM 1318 / BCRC 11384 / CCUG 27702 / LMG 3730 / NBRC 12168 / NCIMB 10025 / NRRL B-2784 / 534)).